The following is a 233-amino-acid chain: Homeobox protein Hox-B6b (233 aa).

The Antp-type hexapeptide signature appears at 136-141; that stretch reads IYPWMQ. The segment at residues 155–214 is a DNA-binding region (homeobox); it reads GRRGRQTYTRYQTLELEKEFHFNRYLTRRRRIEISHALCLTERQIKIWFQNRRMKWKKEN. Residues 213–233 are disordered; the sequence is ENKLLNPSKTPEEEEEAEKKS. Over residues 224–233 the composition is skewed to acidic residues; it reads EEEEEAEKKS.

This sequence belongs to the Antp homeobox family.

The protein resides in the nucleus. Sequence-specific transcription factor which is part of a developmental regulatory system that provides cells with specific positional identities on the anterior-posterior axis. The polypeptide is Homeobox protein Hox-B6b (hoxb6b) (Takifugu rubripes (Japanese pufferfish)).